A 236-amino-acid chain; its full sequence is Class B acid phosphatase (236 aa).

An N-terminal signal peptide occupies residues 1 to 23; sequence MRKLTLTLSALALALSLNSVADA. The Nucleophile role is filled by Asp68. Positions 68 and 70 each coordinate Mg(2+). The Proton donor role is filled by Asp70. Residues 136–137 and Lys176 each bind substrate; that span reads TG. Asp191 is a binding site for Mg(2+).

Belongs to the class B bacterial acid phosphatase family. Homotetramer. Requires Mg(2+) as cofactor.

It is found in the periplasm. It carries out the reaction a phosphate monoester + H2O = an alcohol + phosphate. Activated by ethanol. Also activated by Co(2+), Zn(2+) and glycerol. Inhibited by EDTA, inorganic phosphate, nucleosides and Ca(2+). Unaffected by fluoride and tartrate. Dephosphorylates several organic phosphate monoesters including 5'-AMP, 3'-AMP, pNPP, PDP, 5'-UMP, 3'-UMP, G2P, glucose 6-P and ribose 5-P. No activity toward organic phosphate diesters. Also has a phosphotransferase activity catalyzing the transfer of low-energy phosphate groups from organic phosphate monoesters to free hydroxyl groups of various organic compounds. This chain is Class B acid phosphatase (aphA), found in Morganella morganii (Proteus morganii).